We begin with the raw amino-acid sequence, 223 residues long: Ribonuclease S-2 (223 aa).

Positions 1-22 (MAKSQLVSALFVFFFSLSPIYG) are cleaved as a signal peptide. C38 and C44 are disulfide-bonded. N51 is a glycosylation site (N-linked (GlcNAc...) asparagine). H55 functions as the Proton donor in the catalytic mechanism. RNA contacts are provided by residues H55 and 94-95 (QL). 3 disulfides stabilise this stretch: C71–C119, C178–C211, and C194–C205. Residue Q112 is part of the active site. RNA is bound at residue 115–116 (KH). H116 acts as the Proton acceptor in catalysis.

This sequence belongs to the RNase T2 family. Pistil.

The protein localises to the secreted. Its subcellular location is the extracellular space. The enzyme catalyses a ribonucleotidyl-ribonucleotide-RNA + H2O = a 3'-end 3'-phospho-ribonucleotide-RNA + a 5'-end dephospho-ribonucleoside-RNA + H(+). Its function is as follows. Self-incompatibility (SI) is the inherited ability of a flowering plant to prevent self-fertilization by discriminating between self and non-self pollen during pollination. In many species of the Solanaceae, self-incompatibility is controlled by the single, multiallelic locus S. This stylar glycoprotein is associated with expression of self-incompatibility in potato. The polypeptide is Ribonuclease S-2 (Solanum tuberosum (Potato)).